Here is a 335-residue protein sequence, read N- to C-terminus: Biotin synthase (335 aa).

Residues 43-269 (YFGKKVKLNM…INPTKEIRIA (227 aa)) enclose the Radical SAM core domain. The [4Fe-4S] cluster site is built by C61, C65, and C68. Positions 104, 137, 197, and 267 each coordinate [2Fe-2S] cluster.

It belongs to the radical SAM superfamily. Biotin synthase family. Homodimer. [4Fe-4S] cluster is required as a cofactor. Requires [2Fe-2S] cluster as cofactor.

The catalysed reaction is (4R,5S)-dethiobiotin + (sulfur carrier)-SH + 2 reduced [2Fe-2S]-[ferredoxin] + 2 S-adenosyl-L-methionine = (sulfur carrier)-H + biotin + 2 5'-deoxyadenosine + 2 L-methionine + 2 oxidized [2Fe-2S]-[ferredoxin]. Its pathway is cofactor biosynthesis; biotin biosynthesis; biotin from 7,8-diaminononanoate: step 2/2. In terms of biological role, catalyzes the conversion of dethiobiotin (DTB) to biotin by the insertion of a sulfur atom into dethiobiotin via a radical-based mechanism. The sequence is that of Biotin synthase from Staphylococcus aureus (strain MRSA252).